A 300-amino-acid polypeptide reads, in one-letter code: Cation-efflux pump FieF (300 aa).

4 consecutive transmembrane segments (helical) span residues 12-32 (AALS…FAWW), 40-60 (LAAL…LFVV), 82-102 (AALA…LTGF), and 114-134 (PGLG…LVTF). Positions 45 and 49 each coordinate Zn(2+). 2 residues coordinate Zn(2+): histidine 153 and aspartate 157. The helical transmembrane segment at 164–184 (ILIALALSWYGFHRADALFAL) threads the bilayer.

Belongs to the cation diffusion facilitator (CDF) transporter (TC 2.A.4) family. FieF subfamily. Homodimer.

The protein resides in the cell inner membrane. The catalysed reaction is Zn(2+)(in) + H(+)(out) = Zn(2+)(out) + H(+)(in). It catalyses the reaction Cd(2+)(in) + H(+)(out) = Cd(2+)(out) + H(+)(in). It carries out the reaction Fe(2+)(in) + H(+)(out) = Fe(2+)(out) + H(+)(in). Divalent metal cation transporter which exports Zn(2+), Cd(2+) and possibly Fe(2+). May be involved in zinc and iron detoxification by efflux. In Yersinia enterocolitica serotype O:8 / biotype 1B (strain NCTC 13174 / 8081), this protein is Cation-efflux pump FieF.